The following is a 167-amino-acid chain: Calcium-binding protein CML19 (167 aa).

4 EF-hand domains span residues 23–58 (QKRREIREIFDLFDIDGSGSIDASELNVAMRSLGFE), 59–94 (MNNQQINELMAEVDKNQSGAIDFDEFVHMMTTKFGE), 96–131 (DSIDELSKAFKIIDHDNNGKISPRDIKMIAKELGEN), and 132–167 (FTDNDIEEMIEEADRDKDGEVNLEEFMKMMKRTSYG). Ca(2+) contacts are provided by D36, D38, S40, S42, E47, D72, N74, S76, E83, D109, D111, N113, K115, D120, D145, D147, D149, E151, and E156.

It belongs to the centrin family. Interacts with RAD4. Calcium is required for this interaction. Interacts with SAC3B. Expressed in leaves, roots, and at lower level in stems. Barely detectable in flower buds and flowers.

It is found in the cytoplasm. The protein localises to the nucleus. Functionally, potential calcium sensor that binds calcium in vitro. Modulates homologous recombination and nucleotide excision repair (NER). Involved in the early response to UV irradiation. The protein is Calcium-binding protein CML19 of Arabidopsis thaliana (Mouse-ear cress).